We begin with the raw amino-acid sequence, 313 residues long: tRNA dimethylallyltransferase (313 aa).

10–17 (GPTASGKT) provides a ligand contact to ATP. A substrate-binding site is contributed by 12-17 (TASGKT). Interaction with substrate tRNA regions lie at residues 35–38 (DSAM), 159–163 (QRIQR), and 240–245 (RCVGYR).

It belongs to the IPP transferase family. In terms of assembly, monomer. Mg(2+) is required as a cofactor.

The enzyme catalyses adenosine(37) in tRNA + dimethylallyl diphosphate = N(6)-dimethylallyladenosine(37) in tRNA + diphosphate. In terms of biological role, catalyzes the transfer of a dimethylallyl group onto the adenine at position 37 in tRNAs that read codons beginning with uridine, leading to the formation of N6-(dimethylallyl)adenosine (i(6)A). This is tRNA dimethylallyltransferase from Legionella pneumophila (strain Corby).